Here is a 486-residue protein sequence, read N- to C-terminus: 2-hydroxymuconic semialdehyde dehydrogenase (486 aa).

Active-site residues include Glu254 and Cys288.

Belongs to the aldehyde dehydrogenase family. In terms of assembly, homodimer.

The enzyme catalyses (2Z,4E)-2-hydroxy-6-oxohexa-2,4-dienoate + NAD(+) + H2O = (2Z,4E)-2-hydroxyhexa-2,4-dienedioate + NADH + 2 H(+). It functions in the pathway aromatic compound metabolism; benzoate degradation via hydroxylation. Functionally, 2-hydroxymuconic acid semialdehyde can be converted to 2-hydroxypent-2,4-dienoate either directly by the action of 2-hydroxymuconic semialdehyde hydrolase (HMSH) or by the action of three sequential enzymes, the first of which is HMSD. Can oxidize not only 2-hydroxymuconic semialdehyde and its analogs but also benzaldehyde and its analogs. This Pseudomonas putida (Arthrobacter siderocapsulatus) protein is 2-hydroxymuconic semialdehyde dehydrogenase (xylG).